We begin with the raw amino-acid sequence, 84 residues long: DNA-directed RNA polymerase subunit Rpo5 (84 aa).

Belongs to the archaeal Rpo5/eukaryotic RPB5 RNA polymerase subunit family. Part of the 13-subunit RNA polymerase.

It is found in the cytoplasm. It carries out the reaction RNA(n) + a ribonucleoside 5'-triphosphate = RNA(n+1) + diphosphate. Functionally, DNA-dependent RNA polymerase (RNAP) catalyzes the transcription of DNA into RNA using the four ribonucleoside triphosphates as substrates. In terms of biological role, reconstitution experiments show this subunit is required for basic activity. This is DNA-directed RNA polymerase subunit Rpo5 from Sulfolobus acidocaldarius (strain ATCC 33909 / DSM 639 / JCM 8929 / NBRC 15157 / NCIMB 11770).